A 142-amino-acid chain; its full sequence is Nucleoside diphosphate kinase (142 aa).

Positions 11, 59, 87, 93, 107, and 117 each coordinate ATP. Residue H120 is the Pros-phosphohistidine intermediate of the active site.

The protein belongs to the NDK family. As to quaternary structure, homotetramer. Mg(2+) serves as cofactor.

It is found in the cytoplasm. It carries out the reaction a 2'-deoxyribonucleoside 5'-diphosphate + ATP = a 2'-deoxyribonucleoside 5'-triphosphate + ADP. It catalyses the reaction a ribonucleoside 5'-diphosphate + ATP = a ribonucleoside 5'-triphosphate + ADP. Functionally, major role in the synthesis of nucleoside triphosphates other than ATP. The ATP gamma phosphate is transferred to the NDP beta phosphate via a ping-pong mechanism, using a phosphorylated active-site intermediate. The polypeptide is Nucleoside diphosphate kinase (Aquifex aeolicus (strain VF5)).